We begin with the raw amino-acid sequence, 115 residues long: Tyrosine-protein phosphatase 24 (115 aa).

One can recognise a Tyrosine-protein phosphatase domain in the interval 1-115 (WMMIVEQKCR…ETGSDAPMVV (115 aa)). Aspartate 83 contributes to the substrate binding site.

The protein belongs to the protein-tyrosine phosphatase family.

The catalysed reaction is O-phospho-L-tyrosyl-[protein] + H2O = L-tyrosyl-[protein] + phosphate. This Styela plicata (Wrinkled sea squirt) protein is Tyrosine-protein phosphatase 24 (STY-24).